Reading from the N-terminus, the 312-residue chain is Signal peptidase I (312 aa).

A helical transmembrane segment spans residues 7–27 (IFLLTSTFFTGILWIIDHILL). The Cytoplasmic segment spans residues 28–63 (IKNYFYNKKKTKNNNTILINKVILENKKCFFRSLSS). The chain crosses the membrane as a helical span at residues 64 to 84 (LFPTFFIVFIIRSFIYEPFQI). The Extracellular segment spans residues 85 to 312 (PSGSMMPTLL…IRIKRIGNIY (228 aa)). Active-site residues include Ser88 and Lys142.

Belongs to the peptidase S26 family.

It is found in the cell membrane. It carries out the reaction Cleavage of hydrophobic, N-terminal signal or leader sequences from secreted and periplasmic proteins.. In Buchnera aphidicola subsp. Schizaphis graminum (strain Sg), this protein is Signal peptidase I (lepB).